We begin with the raw amino-acid sequence, 145 residues long: Large ribosomal subunit protein uL13 (145 aa).

Belongs to the universal ribosomal protein uL13 family. As to quaternary structure, part of the 50S ribosomal subunit.

Functionally, this protein is one of the early assembly proteins of the 50S ribosomal subunit, although it is not seen to bind rRNA by itself. It is important during the early stages of 50S assembly. This Staphylococcus haemolyticus (strain JCSC1435) protein is Large ribosomal subunit protein uL13.